The primary structure comprises 351 residues: Peptide chain release factor 1 (351 aa).

The residue at position 233 (glutamine 233) is an N5-methylglutamine.

This sequence belongs to the prokaryotic/mitochondrial release factor family. In terms of processing, methylated by PrmC. Methylation increases the termination efficiency of RF1.

Its subcellular location is the cytoplasm. In terms of biological role, peptide chain release factor 1 directs the termination of translation in response to the peptide chain termination codons UAG and UAA. The polypeptide is Peptide chain release factor 1 (Treponema pallidum subsp. pallidum (strain SS14)).